We begin with the raw amino-acid sequence, 137 residues long: Large ribosomal subunit protein eL32 (137 aa).

The tract at residues 95 to 137 is disordered; that stretch reads PSAAEIATPVSSRKRIASSPARQADRCSRSRRSKFRPRRLRAS. Basic residues predominate over residues 123-137; the sequence is RSRRSKFRPRRLRAS.

It belongs to the eukaryotic ribosomal protein eL32 family.

The chain is Large ribosomal subunit protein eL32 (rpl32) from Trichoderma harzianum (Hypocrea lixii).